The sequence spans 63 residues: Large ribosomal subunit protein bL35 (63 aa).

The protein belongs to the bacterial ribosomal protein bL35 family.

This Finegoldia magna (strain ATCC 29328 / DSM 20472 / WAL 2508) (Peptostreptococcus magnus) protein is Large ribosomal subunit protein bL35.